A 650-amino-acid polypeptide reads, in one-letter code: Sterol O-acyltransferase 2 (650 aa).

The segment at 41-79 is disordered; it reads LTSSNNSCASEHEGEGEGEDERPATTSSAPTQNHSAGDV. Residues 64–75 show a composition bias toward polar residues; that stretch reads ATTSSAPTQNHS. Helical transmembrane passes span 223–243, 300–320, 412–432, 450–470, and 493–513; these read FSGL…KALI, TGWA…MYLT, INVS…QIEY, IFGT…PVAM, and LLVD…YLIW. The short motif at 531 to 537 is the FYXDWWN motif element; that stretch reads FYGDWWN. The next 2 membrane-spanning stretches (helical) occupy residues 575–595 and 630–650; these read ATLM…YVIF and VIFW…YLTF. H587 is an active-site residue.

This sequence belongs to the membrane-bound acyltransferase family. Sterol o-acyltransferase subfamily.

It is found in the endoplasmic reticulum membrane. Sterol O-acyltransferase that catalyzes the formation of stery esters. In Saccharomyces uvarum (strain ATCC 76518 / CBS 7001 / CLIB 283 / NBRC 10550 / MCYC 623 / NCYC 2669 / NRRL Y-11845) (Yeast), this protein is Sterol O-acyltransferase 2 (ARE2).